Reading from the N-terminus, the 259-residue chain is Thiazole synthase (259 aa).

The active-site Schiff-base intermediate with DXP is K98. 1-deoxy-D-xylulose 5-phosphate-binding positions include G159, 185–186, and 207–208; these read AG and NS.

This sequence belongs to the ThiG family. In terms of assembly, homotetramer. Forms heterodimers with either ThiH or ThiS.

Its subcellular location is the cytoplasm. It carries out the reaction [ThiS sulfur-carrier protein]-C-terminal-Gly-aminoethanethioate + 2-iminoacetate + 1-deoxy-D-xylulose 5-phosphate = [ThiS sulfur-carrier protein]-C-terminal Gly-Gly + 2-[(2R,5Z)-2-carboxy-4-methylthiazol-5(2H)-ylidene]ethyl phosphate + 2 H2O + H(+). The protein operates within cofactor biosynthesis; thiamine diphosphate biosynthesis. Its function is as follows. Catalyzes the rearrangement of 1-deoxy-D-xylulose 5-phosphate (DXP) to produce the thiazole phosphate moiety of thiamine. Sulfur is provided by the thiocarboxylate moiety of the carrier protein ThiS. In vitro, sulfur can be provided by H(2)S. The chain is Thiazole synthase from Chlorobium phaeobacteroides (strain DSM 266 / SMG 266 / 2430).